We begin with the raw amino-acid sequence, 103 residues long: Large ribosomal subunit protein bL21 (103 aa).

Belongs to the bacterial ribosomal protein bL21 family. Part of the 50S ribosomal subunit. Contacts protein L20.

In terms of biological role, this protein binds to 23S rRNA in the presence of protein L20. This chain is Large ribosomal subunit protein bL21, found in Psychromonas ingrahamii (strain DSM 17664 / CCUG 51855 / 37).